The primary structure comprises 332 residues: dTDP-3,4-didehydro-2,6-dideoxy-alpha-D-glucose 3-reductase (332 aa).

NADP(+) is bound at residue 12–18 (CASFAWR). Arg19 contributes to the substrate binding site. NADP(+) contacts are provided by residues 37–38 (SR), Tyr58, Leu74, and His79. Lys97 acts as the Proton donor in catalysis. The NADP(+) site is built by Arg165 and Asp177. Substrate-binding residues include Tyr235 and Thr255.

Belongs to the Gfo/Idh/MocA family. As to quaternary structure, monomer.

The enzyme catalyses dTDP-4-dehydro-2,6-dideoxy-alpha-D-glucose + NADP(+) = dTDP-3,4-didehydro-2,6-dideoxy-alpha-D-glucose + NADPH + H(+). Involved in the biosynthesis of forosamine ((4-dimethylamino)-2,3,4,6-tetradeoxy-alpha-D-threo-hexopyranose), a highly deoxygenated sugar component of several bioactive natural products such as the insecticidal spinosyns A and D. Catalyzes the reduction of the C-3 keto moiety of dTDP-3,4-diketo-2,6-dideoxy-alpha-D-glucose to yield dTDP-4-keto-2,6-dideoxy-alpha-D-glucose. NADPH is the better reductant, however NADH can also be used. The polypeptide is dTDP-3,4-didehydro-2,6-dideoxy-alpha-D-glucose 3-reductase (Saccharopolyspora spinosa).